We begin with the raw amino-acid sequence, 240 residues long: ATP synthase subunit a (240 aa).

Helical transmembrane passes span 21–41 (LSSMLMLTVTAAIVFLIAMLF), 83–103 (AVTLLLFIFVANMLGLPFAII), 116–136 (DPTVTLTLSTLMVLLTHFYGV), 184–204 (LLGLLATLGTAGAAGMLGAAI), and 207–227 (LIWQGFSIFVGSIQAYIFVML).

This sequence belongs to the ATPase A chain family. F-type ATPases have 2 components, CF(1) - the catalytic core - and CF(0) - the membrane proton channel. CF(1) has five subunits: alpha(3), beta(3), gamma(1), delta(1), epsilon(1). CF(0) has three main subunits: a(1), b(2) and c(9-12). The alpha and beta chains form an alternating ring which encloses part of the gamma chain. CF(1) is attached to CF(0) by a central stalk formed by the gamma and epsilon chains, while a peripheral stalk is formed by the delta and b chains.

It localises to the cell membrane. Key component of the proton channel; it plays a direct role in the translocation of protons across the membrane. This is ATP synthase subunit a from Macrococcus caseolyticus (strain JCSC5402) (Macrococcoides caseolyticum).